The primary structure comprises 1173 residues: Calcium-transporting ATPase 2 (1173 aa).

Positions Met-1 to Asn-24 are disordered. The Cytoplasmic portion of the chain corresponds to Met-1–Asp-114. The segment covering Asn-7–Asn-17 has biased composition (low complexity). Residues Lys-115–Pro-139 form a helical membrane-spanning segment. Topologically, residues Pro-140–Val-152 are vacuolar. The helical transmembrane segment at Asp-153–Ala-173 threads the bilayer. Over Asn-174–Cys-349 the chain is Cytoplasmic. A helical transmembrane segment spans residues Val-350 to Ile-368. Over Pro-369 to Asn-388 the chain is Vacuolar. The chain crosses the membrane as a helical span at residues Ile-389–Val-409. Residues Val-398 and Glu-403 each coordinate Ca(2+). Over Thr-410–Phe-899 the chain is Cytoplasmic. Asp-445 acts as the 4-aspartylphosphate intermediate in catalysis. The Mg(2+) site is built by Asp-445 and Thr-447. ATP is bound by residues Thr-447, Lys-643, Thr-762–Asp-764, Arg-816, and Lys-822. Mg(2+) is bound at residue Asp-841. An ATP-binding site is contributed by Asn-844. The chain crosses the membrane as a helical span at residues Ile-900 to Ser-922. Position 907 (Asn-907) interacts with Ca(2+). Residues Asp-923–Thr-929 are Vacuolar-facing. A helical membrane pass occupies residues Ala-930–Thr-950. Asn-937 and Asp-941 together coordinate Ca(2+). The Cytoplasmic portion of the chain corresponds to Asp-951–Lys-976. A helical membrane pass occupies residues Met-977–Glu-998. At Leu-999–Ser-1010 the chain is on the vacuolar side. The chain crosses the membrane as a helical span at residues His-1011–Phe-1029. The Cytoplasmic portion of the chain corresponds to Phe-1030–Asn-1065. The helical transmembrane segment at Tyr-1066–Gly-1086 threads the bilayer. The Vacuolar portion of the chain corresponds to Gly-1087–Met-1099. A helical membrane pass occupies residues Trp-1100–Cys-1120. The Cytoplasmic segment spans residues Pro-1121–Tyr-1173.

Belongs to the cation transport ATPase (P-type) (TC 3.A.3) family.

The protein resides in the vacuole membrane. It catalyses the reaction Ca(2+)(in) + ATP + H2O = Ca(2+)(out) + ADP + phosphate + H(+). In terms of biological role, this magnesium-dependent enzyme catalyzes the hydrolysis of ATP coupled with the transport of calcium. Transports the calcium to the vacuole and participates in the control of the cytosolic free calcium. This Saccharomyces cerevisiae (strain ATCC 204508 / S288c) (Baker's yeast) protein is Calcium-transporting ATPase 2 (PMC1).